A 180-amino-acid polypeptide reads, in one-letter code: Ribulose bisphosphate carboxylase small subunit, chloroplastic 1 (180 aa).

A chloroplast-targeting transit peptide spans 1–56; that stretch reads MASSVLSSAAVATRSNVAQANMVAPFTGLKSAASFPVSRKQNLDITSIASNGGRVQ.

This sequence belongs to the RuBisCO small chain family. In terms of assembly, heterohexadecamer of 8 large and 8 small subunits.

It localises to the plastid. Its subcellular location is the chloroplast. In terms of biological role, ruBisCO catalyzes two reactions: the carboxylation of D-ribulose 1,5-bisphosphate, the primary event in carbon dioxide fixation, as well as the oxidative fragmentation of the pentose substrate. Both reactions occur simultaneously and in competition at the same active site. Although the small subunit is not catalytic it is essential for maximal activity. The sequence is that of Ribulose bisphosphate carboxylase small subunit, chloroplastic 1 from Nicotiana sylvestris (Wood tobacco).